A 105-amino-acid chain; its full sequence is uncharacterized protein (105 aa).

The chain crosses the membrane as a helical span at residues 64-84; it reads ILLISIFFLLLFALPQHTMGI.

The protein localises to the membrane. This is an uncharacterized protein from Saccharomyces cerevisiae (strain ATCC 204508 / S288c) (Baker's yeast).